The following is a 2391-amino-acid chain: Filaggrin-2 (2391 aa).

An S-100-like region spans residues 1–81 (MTDLLRSVVT…TEFLLMIFKL (81 aa)). EF-hand domains follow at residues 8–43 (VVTV…ELHP) and 49–84 (DDPD…LTMA). Residues aspartate 62, aspartate 64, aspartate 66, arginine 68, and glutamate 73 each contribute to the Ca(2+) site. Disordered stretches follow at residues 96-275 (ASGS…DSGR), 349-369 (SYSQ…CGGQ), and 406-2391 (NSSS…LSRH). Residues 98–107 (GSKKHRRGHR) are compositionally biased toward basic residues. Acidic residues predominate over residues 111 to 121 (EESETEEDEED). The segment covering 149-163 (GTVKCRHGSNSRRLG) has biased composition (basic residues). Residues 166–176 (GNLSSSGNQEG) are compositionally biased toward polar residues. The span at 193 to 209 (GKDRHGSSSVELRERIN) shows a compositional bias: basic and acidic residues. The Filaggrin 1 repeat unit spans residues 245–289 (ETSGHESNSTQSRIREQKLGSSCSGSGDSGRRSHACGYSNSSGCG). Composition is skewed to polar residues over residues 420–442 (GSGS…SSGF) and 449–476 (SGQT…SGKT). The stretch at 421–466 (SGSSQSTSFEQHGTGLSQSSGFEQHVCGSGQTCGQHESTSSQSLGY) is one Filaggrin 2 repeat. Gly residues predominate over residues 480 to 507 (GQHGSGSGQSSGFGQCGSGSGQSSGFGQ). A compositionally biased stretch (low complexity) spans 508-562 (HGSVSGQSSGFGQHGSVSGQSSGFGQHESRSRQSSYGQHGSGSSQSSGYGQYGSR). Positions 568 to 604 (GQHGLGSGQSTGFGQYGSGSGQSSGFGQHGSGSGQSS) are enriched in gly residues. Positions 605 to 655 (GFGQHESRSGQSSYGQHSSGSSQSSGYGQHGSRQTSGFGQHGSGSSQSTGF) are enriched in low complexity. Positions 656–666 (GQYGSGSGQSS) are enriched in gly residues. The segment covering 667–734 (GFGQHVSGSG…SSGQSSSFGQ (68 aa)) has biased composition (low complexity). Residues 735 to 756 (HGSGSGQSSGFGQHGSGSGQSS) are compositionally biased toward gly residues. The segment covering 757 to 807 (GFGQHESRSGQSSYGQHSSGSSQSSGYGQHGSRQTSGFGQHGSGSSQSTGF) has biased composition (low complexity). A compositionally biased stretch (gly residues) spans 808 to 831 (GQYGSGSGQSAGFGQHGSGSGQSS). Low complexity predominate over residues 832–884 (GFGQHESRSHQSSYGQHGSGSSQSSGYGQHGSSSGQTSGFGQHRSSSGQYSGF). A compositionally biased stretch (gly residues) spans 885–908 (GQHGSGSGQSSGFGQHGTGSGQYS). Residues 918–956 (HQSSYGQHGSGSSQSSGYGQHGSSSGQTFGFGQHRSGSG) are compositionally biased toward low complexity. The span at 957–972 (QSSGFGQHGSGSGQSS) shows a compositional bias: gly residues. Composition is skewed to low complexity over residues 973–982 (GFGQHESGSG) and 994–1027 (SSQS…GFGQ). The stretch at 1019-1051 (SGQTTGFGQHRSSSGQYSGFGQHGSGSDQSSGF) is one Filaggrin 3 repeat. Residues 1052–1062 (GQHGTGSGQSS) show a composition bias toward gly residues. Residues 1063–1098 (GFGQYESRSRQSSYGQHGSGSSQSSGYGQHGSNSGQ) show a composition bias toward low complexity. Residues 1097 to 1141 (GQTSGFGQHRPGSGQSSGFGQYGSGSGQSSGFGQHGSGTGKSSGF) form a Filaggrin 4 repeat. The segment covering 1111–1137 (QSSGFGQYGSGSGQSSGFGQHGSGTGK) has biased composition (gly residues). The segment covering 1148–1174 (SGQSSYGQHGTGSSQSSGCGQHESGSG) has biased composition (low complexity). The segment covering 1175 to 1198 (PTTSFGQHVSGSDNFSSSGQHISD) has biased composition (polar residues). Residues 1206–1220 (GQYGSGSGQSTGLGQ) are compositionally biased toward gly residues. Positions 1226–1249 (VESGSTVHGRQETTHGQTINTTRH) are enriched in polar residues. Low complexity predominate over residues 1250 to 1263 (SQSGQGQSTQTGSR). Phosphoserine is present on serine 1276. Residues 1329–1343 (HGQSTQTGSRTSGRQ) show a composition bias toward polar residues. The segment covering 1346–1355 (SHSDATDSEV) has biased composition (basic and acidic residues). Over residues 1366–1377 (QEQTHSQAGSQH) the composition is skewed to polar residues. The segment covering 1378-1390 (GESESTVHERHET) has biased composition (basic and acidic residues). A compositionally biased stretch (low complexity) spans 1406 to 1416 (HGQSTQRGSRT). Residues serine 1427 and serine 1428 each carry the phosphoserine modification. Residues 1439-1459 (RPQSQEQTHGQAGSQHGESGS) show a composition bias toward polar residues. The Filaggrin 5 repeat unit spans residues 1455–1510 (GESGSTVHGRHGTTHGQTGDTTRHAHYHHGKSTQRGSSTTGRRGSGHSESSDSEVH). Positions 1487–1496 (TQRGSSTTGR) are enriched in low complexity. Phosphoserine occurs at positions 1504 and 1505. Low complexity predominate over residues 1510–1529 (HSGGSHTHSGHTHGQSGSQH). Positions 1544–1559 (HGQTGDTTRHSYSGHE) are enriched in polar residues. The segment covering 1560-1572 (QTTQTGSRTTGRQ) has biased composition (low complexity). 2 stretches are compositionally biased toward basic and acidic residues: residues 1575–1584 (SHSESTDSEV) and 1605–1618 (QHEE…ERHG). The residue at position 1579 (serine 1579) is a Phosphoserine. The Filaggrin 6 repeat unit spans residues 1607 to 1662 (EEPEFTVHERHGTTHGQIGDTTGHSHSGHGQSTQRGSRTTGRQRSSHSESSDSEVH). The span at 1627–1649 (TTGHSHSGHGQSTQRGSRTTGRQ) shows a compositional bias: low complexity. Over residues 1652-1661 (SHSESSDSEV) the composition is skewed to basic and acidic residues. Phosphoserine occurs at positions 1656 and 1657. 2 stretches are compositionally biased toward low complexity: residues 1662-1686 (HSGV…QSES) and 1711-1720 (GLTTQTGSRT). Residues 1755-1768 (QHGESESIVHERHG) show a composition bias toward basic and acidic residues. One copy of the Filaggrin 7 repeat lies at 1757–1812 (GESESIVHERHGTIHGQTGDTTRHAHSGHGQSTQTGSRTTGRRSSGHSEYSDSEGH). The span at 1784-1795 (GHGQSTQTGSRT) shows a compositional bias: low complexity. Phosphoserine is present on residues serine 1800 and serine 1807. A compositionally biased stretch (basic and acidic residues) spans 1834-1845 (GESESIVDERHG). Positions 1849–1873 (GQTGDTSGHSQSGHGQSTQSGSSTT) are enriched in low complexity. The span at 1879 to 1888 (GHSESSDSEV) shows a compositional bias: basic and acidic residues. Phosphoserine occurs at positions 1883, 1884, and 1959. Filaggrin repeat units lie at residues 1928–1964 (DTTE…SEGP) and 1984–2039 (PESG…SEGH). Composition is skewed to low complexity over residues 1963–1982 (GPSG…AGSH) and 2013–2022 (GQSTQRGSRT). Serine 2034 carries the post-translational modification Phosphoserine. Composition is skewed to low complexity over residues 2039 to 2059 (HSGV…SQHG), 2114 to 2125 (HSGVSHTHSGHT), and 2162 to 2176 (HGQS…TGRQ). One copy of the Filaggrin 10 repeat lies at 2134–2189 (GESGSAIHGRQGTIHGQTGDTTRHGQSGHGQSTQTGSRTTGRQRSSHSESSDSEVH). A compositionally biased stretch (basic and acidic residues) spans 2179-2190 (SHSESSDSEVHS). 3 stretches are compositionally biased toward low complexity: residues 2201–2211 (HSQAGSRHGQS), 2219–2228 (QGTTHGQTGD), and 2238–2247 (GQSTQRGSRT). Residues 2273-2288 (GHIQGQAGSQQRQPGS) show a composition bias toward polar residues. Positions 2320–2331 (SRSSRASHFQSH) are enriched in low complexity. The segment covering 2367–2391 (SRKSISNSHLSWSTDSTANKQLSRH) has biased composition (polar residues).

It belongs to the S100-fused protein family. This sequence in the N-terminal section; belongs to the S-100 family. Post-translationally, deiminated by PADI1, PADI2 or PADI3 in vitro. The deiminated form is degraded by calpain-1/CAPN1 more quickly and into shorter peptides than the intact protein. May be processed by calpain-1/CAPN1 in the uppermost epidermal layers. As to expression, expressed in skin, thymus, stomach and placenta, but not detected in heart, brain, liver, lung, bone marrow, small intestine, spleen, prostate, colon, adrenal gland, kidney, pancreas, mammary gland, bladder, thyroid, salivary gland and trachea. Weakly expressed in esophagus, tonsils and testis (at protein level). In the skin, strongly expressed in the upper stratum granulosum and lower stratum corneum, but not detected in the upper stratum corneum (at protein level). In scalp hair follicles, mainly restricted within the granular and cornified cells surrounding the infundibular outer root sheath, with weak expression in central and proximal outer root sheath (at protein level). Tends to be down-regulated in sporiatic lesions compared to non-lesional skin inthe same patients.

It localises to the cytoplasm. Its subcellular location is the cytoplasmic granule. Essential for normal cell-cell adhesion in the cornified cell layers. Important for proper integrity and mechanical strength of the stratum corneum of the epidermis. This Homo sapiens (Human) protein is Filaggrin-2 (FLG2).